A 590-amino-acid polypeptide reads, in one-letter code: Conglutin beta 4 (590 aa).

An N-terminal signal peptide occupies residues 1 to 30 (MIKMRVRFPTLVLLLGIVFLMAVSIGIAYG). Over residues 38–105 (HERPQEREQE…REPRREREQE (68 aa)) the composition is skewed to basic and acidic residues. Positions 38-175 (HERPQEREQE…DSRRQRNPYY (138 aa)) are disordered. Residues 137–146 (QGSSSSSRRQ) are compositionally biased toward low complexity. In terms of domain architecture, Cupin type-1 1 spans 174-332 (YYFSSERFQT…TFNTRYEEIQ (159 aa)). Asparagine 239 carries an N-linked (GlcNAc...) asparagine glycan. Disordered regions lie at residues 340 to 362 (DEQE…GVIV) and 374 to 396 (KYAQ…LRSN). Positions 346-362 (EQRHGQEQSHQDEGVIV) are enriched in basic and acidic residues. Residues 391-548 (FNLRSNKPIY…TFPGSTEDVE (158 aa)) enclose the Cupin type-1 2 domain. N-linked (GlcNAc...) asparagine glycosylation occurs at asparagine 498. The interval 559–579 (FANAQPQQQQQREREGRRGRR) is disordered.

This sequence belongs to the 7S seed storage protein family. As to quaternary structure, component of globulins complexes which accumulate in seeds.

Seed storage protein. Accumulates during seed development and is hydrolyzed after germination to provide a carbon and nitrogen source for the developing seedling. This is Conglutin beta 4 from Lupinus angustifolius (Narrow-leaved blue lupine).